A 190-amino-acid polypeptide reads, in one-letter code: Holliday junction branch migration complex subunit RuvA (190 aa).

The tract at residues 1 to 64 (MIGRITGTLI…EDAQLLYGFG (64 aa)) is domain I. Residues 65 to 137 (SSAERSTFRE…MRGKLGADIG (73 aa)) are domain II. The segment at 137–141 (GATPH) is flexible linker. The interval 142–190 (AASGHQSDILNALLALGYSDKESQAALKKLPDGVDVSEGIRLALKALVR) is domain III.

The protein belongs to the RuvA family. In terms of assembly, homotetramer. Forms an RuvA(8)-RuvB(12)-Holliday junction (HJ) complex. HJ DNA is sandwiched between 2 RuvA tetramers; dsDNA enters through RuvA and exits via RuvB. An RuvB hexamer assembles on each DNA strand where it exits the tetramer. Each RuvB hexamer is contacted by two RuvA subunits (via domain III) on 2 adjacent RuvB subunits; this complex drives branch migration. In the full resolvosome a probable DNA-RuvA(4)-RuvB(12)-RuvC(2) complex forms which resolves the HJ.

It localises to the cytoplasm. The RuvA-RuvB-RuvC complex processes Holliday junction (HJ) DNA during genetic recombination and DNA repair, while the RuvA-RuvB complex plays an important role in the rescue of blocked DNA replication forks via replication fork reversal (RFR). RuvA specifically binds to HJ cruciform DNA, conferring on it an open structure. The RuvB hexamer acts as an ATP-dependent pump, pulling dsDNA into and through the RuvAB complex. HJ branch migration allows RuvC to scan DNA until it finds its consensus sequence, where it cleaves and resolves the cruciform DNA. The chain is Holliday junction branch migration complex subunit RuvA from Bordetella pertussis (strain Tohama I / ATCC BAA-589 / NCTC 13251).